A 342-amino-acid polypeptide reads, in one-letter code: tRNA N6-adenosine threonylcarbamoyltransferase (342 aa).

Positions 111 and 115 each coordinate Fe cation. Substrate-binding positions include 134 to 138 (LVSGG), Asp-167, Gly-180, and Asn-272. A Fe cation-binding site is contributed by Asp-300.

It belongs to the KAE1 / TsaD family. Requires Fe(2+) as cofactor.

It is found in the cytoplasm. It catalyses the reaction L-threonylcarbamoyladenylate + adenosine(37) in tRNA = N(6)-L-threonylcarbamoyladenosine(37) in tRNA + AMP + H(+). In terms of biological role, required for the formation of a threonylcarbamoyl group on adenosine at position 37 (t(6)A37) in tRNAs that read codons beginning with adenine. Is involved in the transfer of the threonylcarbamoyl moiety of threonylcarbamoyl-AMP (TC-AMP) to the N6 group of A37, together with TsaE and TsaB. TsaD likely plays a direct catalytic role in this reaction. This Aromatoleum aromaticum (strain DSM 19018 / LMG 30748 / EbN1) (Azoarcus sp. (strain EbN1)) protein is tRNA N6-adenosine threonylcarbamoyltransferase.